A 149-amino-acid polypeptide reads, in one-letter code: MQVILLDKVANLGSLGDQVNVKAGYARNFLVPQGKAVPATKKNIEFFEARRAELEAKLAEVLAAANARAEKIDALETVTIASKAGDEGKLFGSIGTRDIADAVTAAGVEVAKSEVRLPNGVLRTTGEHEVSFQVHSEVFAKVIVNVVAE.

Residue K89 is modified to N6-acetyllysine.

It belongs to the bacterial ribosomal protein bL9 family.

Functionally, binds to the 23S rRNA. In Shigella dysenteriae serotype 1 (strain Sd197), this protein is Large ribosomal subunit protein bL9.